The sequence spans 160 residues: Myosin catalytic light chain LC-1, mantle muscle (160 aa).

Blocked amino end (Xaa) is present on residue 1. EF-hand domains follow at residues 7–44 (DEIE…LGMN), 83–118 (TAAD…LGER), and 119–153 (ITED…VMAG).

In molluscan muscle, calcium regulation is associated with myosin rather than with actin. Muscle myosin contains two types of light chains: the catalytic light chain, essential for ATPase activity, and the regulatory light chain, a calcium-binding protein responsible for Ca(2+) dependent binding and Ca(2+) dependent Mg-ATPase activity. This chain is Myosin catalytic light chain LC-1, mantle muscle, found in Todarodes pacificus (Japanese flying squid).